The following is a 64-amino-acid chain: Drosocin antimicrobial peptides (64 aa).

The signal sequence occupies residues 1 to 19 (MKFTIVFLLLACVFAMAVA). A propeptide spanning residues 20 to 21 (TP) is cleaved from the precursor. Serine 28 carries an O-linked (GalNAc...) serine glycan. The O-linked (GalNAc...) threonine glycan is linked to threonine 32. Residues 32-40 (TSHPRPIRV) are critical for inhibition of translation, possibly due to its role in mediating interactions with bacterial 23S rRNA and peptide chain release factors.

The protein belongs to the drosocin family. In terms of assembly, associates with the bacterial 50S ribosomal complex, occupying the nascent peptide exit tunnel. Interacts with bacterial 23S rRNA; this interaction is direct. Interacts with bacterial rplV/50S ribosomal protein L22; this interaction is direct. Interacts with bacterial prfA/peptide chain release factor RF1; while associated with the bacterial 50S ribosomal complex, this interaction is direct and traps RF1 on the ribosome, inhibiting further translation. Post-translationally, proteolytically cleaved at a pair of basic residues corresponding to the RXK/RR optimal cleavage site for furin proteases to produce two distinct antibacterial peptides. O-glycosylated. O-glycosylation may be required for efficient uptake by target bacterial cells. Monosaccharide modification of Thr-32 provides better antibacterial activity than disaccharide modification or no modification. O-glycosylation of Thr-32 is not essential for antimicrobial activity but enhances this activity by mediating interactions with the 23S rRNA and increasing the efficiency of translation inhibition.

It localises to the secreted. In terms of biological role, antibacterial peptide with strong anti-Gram-negative bacteria activity. Significantly contributes to antibacterial activity against Enterobacter cloacae but not Providencia burhodogranariea. Inhibitor of bacterial translation machinery that targets translation termination in a prfA- or prfB-dependent manner. Binds within the nascent peptide exit tunnel of the bacterial large ribosomal subunit, potentially interfering with nascent chain translocation that occurs post-peptide bond formation. Binds prfA/RF1 (and potentially prfB/RF2), trapping it on the ribosome after release of the nascent polypeptide chain and preventing further translation. The resulting depletion of peptide chain release factors further disrupts bacterial translation by preventing ribosomal peptide chain release and inducing stop codon readthrough. Entry into target Escherichia coli cells requires the bacterial peptide antibiotic transporter sbmA. Its function is as follows. Peptide with significant antibacterial activity against Providencia burhodogranariea but not Enterobacter cloacae. The sequence is that of Drosocin antimicrobial peptides (Dro) from Drosophila simulans (Fruit fly).